Here is a 415-residue protein sequence, read N- to C-terminus: Glucose-1-phosphate adenylyltransferase (415 aa).

Alpha-D-glucose 1-phosphate is bound by residues Y98, G163, 178 to 179, and S189; that span reads EK.

It belongs to the bacterial/plant glucose-1-phosphate adenylyltransferase family. In terms of assembly, homotetramer.

The catalysed reaction is alpha-D-glucose 1-phosphate + ATP + H(+) = ADP-alpha-D-glucose + diphosphate. The protein operates within glycan biosynthesis; glycogen biosynthesis. Its function is as follows. Involved in the biosynthesis of ADP-glucose, a building block required for the elongation reactions to produce glycogen. Catalyzes the reaction between ATP and alpha-D-glucose 1-phosphate (G1P) to produce pyrophosphate and ADP-Glc. The protein is Glucose-1-phosphate adenylyltransferase of Fervidobacterium nodosum (strain ATCC 35602 / DSM 5306 / Rt17-B1).